A 141-amino-acid polypeptide reads, in one-letter code: Large ribosomal subunit protein bL17 (141 aa).

It belongs to the bacterial ribosomal protein bL17 family. Part of the 50S ribosomal subunit. Contacts protein L32.

This is Large ribosomal subunit protein bL17 from Rhizobium meliloti (strain 1021) (Ensifer meliloti).